The following is a 223-amino-acid chain: DNA-directed RNA polymerase III subunit RPC7 (223 aa).

Residues 111–124 (MMPRKKCKKGDPKS) are compositionally biased toward basic and acidic residues. The tract at residues 111 to 223 (MMPRKKCKKG…SDDNMDEATY (113 aa)) is disordered. Thr134 bears the Phosphothreonine mark. Residues 144-156 (KTIEELEKRGEGE) are compositionally biased toward basic and acidic residues. A Phosphoserine modification is found at Ser158. 2 stretches are compositionally biased toward acidic residues: residues 173–198 (KDDE…EEND) and 206–223 (NGDD…EATY).

It belongs to the eukaryotic RPC7 RNA polymerase subunit family. As to quaternary structure, component of the RNA polymerase III complex consisting of 17 subunits: a ten-subunit horseshoe-shaped catalytic core composed of POLR3A/RPC1, POLR3B/RPC2, POLR1C/RPAC1, POLR1D/RPAC2, POLR3K/RPC10, POLR2E/RPABC1, POLR2F/RPABC2, POLR2H/RPABC3, POLR2K/RPABC4 and POLR2L/RPABC5; a mobile stalk composed of two subunits POLR3H/RPC8 and CRCP/RPC9, protruding from the core and functioning primarily in transcription initiation; and additional subunits homologous to general transcription factors of the RNA polymerase II machinery, POLR3C/RPC3-POLR3F/RPC6-POLR3G/RPC7 heterotrimer required for transcription initiation and POLR3D/RPC4-POLR3E/RPC5 heterodimer involved in both transcription initiation and termination. Directly interacts with POLR3C/RPC62. Also found in a trimeric complex with POLR3C/RPC3 and POLR3GL. As to expression, expressed at low levels in the liver.

It localises to the nucleus. The protein localises to the cytoplasm. DNA-dependent RNA polymerase catalyzes the transcription of DNA into RNA using the four ribonucleoside triphosphates as substrates. Specific peripheric component of RNA polymerase III (Pol III) which synthesizes small non-coding RNAs including 5S rRNA, snRNAs, tRNAs and miRNAs from at least 500 distinct genomic loci. Acts as a long tether that bridges POLR3C/RPC3-POLR3F/RPC6-POLR3G/RPC7 heterotrimer and the mobile stalk of Pol III, coordinating the dynamics of Pol III stalk and clamp modules during the transition from apo to elongation state. Pol III exists as two alternative complexes defined by the mutually exclusive incorporation of subunit POLR3G/RPC7alpha or POLR3GL/RPC7beta. POLR3G/RPC7alpha modulates Pol III transcriptome by specifically enhancing the transcription of snaR-A non-coding RNAs. At resting state, occupies the active site of apo Pol III and keeps Pol III in an autoinhibitory mode, preventing non-specific transcription. Pol III plays a key role in sensing and limiting infection by intracellular bacteria and DNA viruses. Acts as a nuclear and cytosolic DNA sensor involved in innate immune response. Can sense non-self dsDNA that serves as template for transcription into dsRNA. The non-self RNA polymerase III transcripts, such as Epstein-Barr virus-encoded RNAs (EBERs), induce type I interferon and NF-kappa-B through the RIG-I pathway. The polypeptide is DNA-directed RNA polymerase III subunit RPC7 (Polr3g) (Mus musculus (Mouse)).